The primary structure comprises 294 residues: Complement C1q tumor necrosis factor-related protein 2 (294 aa).

Residues 1-24 form the signal peptide; sequence MTIFKKVTTMISWVLLACALPCAA. Residues 42-156 are disordered; that stretch reads QLVCSLPGPQ…PGPCSCGSSR (115 aa). A Collagen-like domain is found at 48-150; it reads PGPQGPPGPP…KGEPGLPGPC (103 aa). Positions 50–59 are enriched in pro residues; it reads PQGPPGPPGA. Positions 75 to 87 are enriched in basic and acidic residues; sequence DGQDGQDGDRGDS. The span at 105-129 shows a compositional bias: low complexity; sequence KGKAGAIGRAGPRGPKGVSGTPGKH. In terms of domain architecture, C1q spans 154-290; it reads SSRAKSAFSV…GFLIYADQGD (137 aa).

As to quaternary structure, may interact with ERFE.

Its subcellular location is the secreted. Involved in the regulation of lipid metabolism in adipose tissue and liver. This Mus musculus (Mouse) protein is Complement C1q tumor necrosis factor-related protein 2 (C1qtnf2).